The sequence spans 308 residues: Ribonuclease Z (308 aa).

The Zn(2+) site is built by His60, His62, Asp64, His65, His140, Asp209, and His269. Catalysis depends on Asp64, which acts as the Proton acceptor.

Belongs to the RNase Z family. Homodimer. Requires Zn(2+) as cofactor.

The enzyme catalyses Endonucleolytic cleavage of RNA, removing extra 3' nucleotides from tRNA precursor, generating 3' termini of tRNAs. A 3'-hydroxy group is left at the tRNA terminus and a 5'-phosphoryl group is left at the trailer molecule.. Functionally, zinc phosphodiesterase, which displays some tRNA 3'-processing endonuclease activity. Probably involved in tRNA maturation, by removing a 3'-trailer from precursor tRNA. This Methanococcus maripaludis (strain C6 / ATCC BAA-1332) protein is Ribonuclease Z.